The sequence spans 439 residues: ATP-dependent DNA helicase dda (439 aa).

32-39 (GPAGTGKT) is an ATP binding site.

As to quaternary structure, monomer. Interacts with UvsX and gene 32 protein.

It catalyses the reaction Couples ATP hydrolysis with the unwinding of duplex DNA at the replication fork by translocating in the 5'-3' direction. This creates two antiparallel DNA single strands (ssDNA). The leading ssDNA polymer is the template for DNA polymerase III holoenzyme which synthesizes a continuous strand.. The enzyme catalyses ATP + H2O = ADP + phosphate + H(+). Functionally, DNA helicase that stimulates viral DNA replication and recombination. Plays a role in T4 DNA replication initiation by selecting and activating DNA origins. Acts by dissociating and reassociating with the DNA molecule being unwound. Unwinds DNA as a monomer in a 5'-3' direction at a rate of 250 bp/s and can efficiently displace proteins from the DNA. This is ATP-dependent DNA helicase dda (dda) from Enterobacteria phage T4 (Bacteriophage T4).